We begin with the raw amino-acid sequence, 40 residues long: Large ribosomal subunit protein bL36 (40 aa).

It belongs to the bacterial ribosomal protein bL36 family.

In Corynebacterium urealyticum (strain ATCC 43042 / DSM 7109), this protein is Large ribosomal subunit protein bL36.